The primary structure comprises 398 residues: Probable pectate lyase P56 (398 aa).

The N-terminal stretch at methionine 1–alanine 27 is a signal peptide. The N-linked (GlcNAc...) asparagine glycan is linked to asparagine 135. 3 residues coordinate Ca(2+): aspartate 192, aspartate 217, and aspartate 221. N-linked (GlcNAc...) asparagine glycosylation occurs at asparagine 228. Residue arginine 273 is part of the active site.

Belongs to the polysaccharide lyase 1 family. Requires Ca(2+) as cofactor. As to expression, expressed in anthers and pollen.

It catalyses the reaction Eliminative cleavage of (1-&gt;4)-alpha-D-galacturonan to give oligosaccharides with 4-deoxy-alpha-D-galact-4-enuronosyl groups at their non-reducing ends.. It functions in the pathway glycan metabolism; pectin degradation; 2-dehydro-3-deoxy-D-gluconate from pectin: step 2/5. Functionally, might be needed during pollen development and tube growth. The sequence is that of Probable pectate lyase P56 (LAT56) from Solanum lycopersicum (Tomato).